The sequence spans 89 residues: Small ribosomal subunit protein uS15 (89 aa).

The span at 1–21 (MVLDPTQKKSVIDAHAKHEGD) shows a compositional bias: basic and acidic residues. The interval 1–24 (MVLDPTQKKSVIDAHAKHEGDTGS) is disordered.

It belongs to the universal ribosomal protein uS15 family. As to quaternary structure, part of the 30S ribosomal subunit. Forms a bridge to the 50S subunit in the 70S ribosome, contacting the 23S rRNA.

Its function is as follows. One of the primary rRNA binding proteins, it binds directly to 16S rRNA where it helps nucleate assembly of the platform of the 30S subunit by binding and bridging several RNA helices of the 16S rRNA. In terms of biological role, forms an intersubunit bridge (bridge B4) with the 23S rRNA of the 50S subunit in the ribosome. The chain is Small ribosomal subunit protein uS15 from Desulfovibrio desulfuricans (strain ATCC 27774 / DSM 6949 / MB).